We begin with the raw amino-acid sequence, 362 residues long: Phosphoserine aminotransferase (362 aa).

An L-glutamate-binding site is contributed by Arg42. Residues 76–77, Trp102, Thr152, Asp173, and Gln196 each bind pyridoxal 5'-phosphate; that span reads AS. Lys197 carries the N6-(pyridoxal phosphate)lysine modification. Residue 238-239 participates in pyridoxal 5'-phosphate binding; the sequence is NT.

It belongs to the class-V pyridoxal-phosphate-dependent aminotransferase family. SerC subfamily. In terms of assembly, homodimer. Pyridoxal 5'-phosphate is required as a cofactor.

The protein resides in the cytoplasm. The catalysed reaction is O-phospho-L-serine + 2-oxoglutarate = 3-phosphooxypyruvate + L-glutamate. The enzyme catalyses 4-(phosphooxy)-L-threonine + 2-oxoglutarate = (R)-3-hydroxy-2-oxo-4-phosphooxybutanoate + L-glutamate. It participates in amino-acid biosynthesis; L-serine biosynthesis; L-serine from 3-phospho-D-glycerate: step 2/3. Its pathway is cofactor biosynthesis; pyridoxine 5'-phosphate biosynthesis; pyridoxine 5'-phosphate from D-erythrose 4-phosphate: step 3/5. In terms of biological role, catalyzes the reversible conversion of 3-phosphohydroxypyruvate to phosphoserine and of 3-hydroxy-2-oxo-4-phosphonooxybutanoate to phosphohydroxythreonine. The sequence is that of Phosphoserine aminotransferase from Chromobacterium violaceum (strain ATCC 12472 / DSM 30191 / JCM 1249 / CCUG 213 / NBRC 12614 / NCIMB 9131 / NCTC 9757 / MK).